Here is a 368-residue protein sequence, read N- to C-terminus: UDP-N-acetylenolpyruvoylglucosamine reductase (368 aa).

Residues 32 to 199 (IGGKPRSAVR…LAIELQLLTD (168 aa)) enclose the FAD-binding PCMH-type domain. The active site involves R177. S257 (proton donor) is an active-site residue. The active site involves E358.

Belongs to the MurB family. Requires FAD as cofactor.

The protein resides in the cytoplasm. The catalysed reaction is UDP-N-acetyl-alpha-D-muramate + NADP(+) = UDP-N-acetyl-3-O-(1-carboxyvinyl)-alpha-D-glucosamine + NADPH + H(+). It functions in the pathway cell wall biogenesis; peptidoglycan biosynthesis. Its function is as follows. Cell wall formation. The sequence is that of UDP-N-acetylenolpyruvoylglucosamine reductase from Corynebacterium glutamicum (strain R).